The sequence spans 489 residues: Rhamnulokinase (489 aa).

13-17 contributes to the ATP binding site; the sequence is ASSGR. An intrachain disulfide couples Cys68 to Cys222. Substrate-binding positions include Gly83 and 236–238; that span reads HDT. Asp237 functions as the Proton acceptor in the catalytic mechanism. Residue Thr259 participates in ATP binding. Asn296 lines the substrate pocket. Gln304 lines the ATP pocket. Cysteines 353 and 370 form a disulfide. An ATP-binding site is contributed by Gly402. Cys413 and Cys417 form a disulfide bridge.

It belongs to the rhamnulokinase family. In terms of assembly, monomer. Requires Mg(2+) as cofactor.

The catalysed reaction is L-rhamnulose + ATP = L-rhamnulose 1-phosphate + ADP + H(+). Its pathway is carbohydrate degradation; L-rhamnose degradation; glycerone phosphate from L-rhamnose: step 2/3. Functionally, involved in the catabolism of L-rhamnose (6-deoxy-L-mannose). Catalyzes the transfer of the gamma-phosphate group from ATP to the 1-hydroxyl group of L-rhamnulose to yield L-rhamnulose 1-phosphate. This Escherichia coli O127:H6 (strain E2348/69 / EPEC) protein is Rhamnulokinase.